The chain runs to 316 residues: Small ribosomal subunit biogenesis GTPase RsgA (316 aa).

The tract at residues 1-20 (MSKLSHQQQRRIHNHRQNKL) is disordered. Basic residues predominate over residues 8-18 (QQRRIHNHRQN). Positions 92–251 (AGKLKPVASN…IIDTPGVRGF (160 aa)) constitute a CP-type G domain. Residues 139–142 (NKSD) and 193–201 (GQSGVGKSS) contribute to the GTP site. Residues cysteine 275, cysteine 280, histidine 282, and cysteine 288 each contribute to the Zn(2+) site.

Belongs to the TRAFAC class YlqF/YawG GTPase family. RsgA subfamily. Monomer. Associates with 30S ribosomal subunit, binds 16S rRNA. Requires Zn(2+) as cofactor.

The protein resides in the cytoplasm. One of several proteins that assist in the late maturation steps of the functional core of the 30S ribosomal subunit. Helps release RbfA from mature subunits. May play a role in the assembly of ribosomal proteins into the subunit. Circularly permuted GTPase that catalyzes slow GTP hydrolysis, GTPase activity is stimulated by the 30S ribosomal subunit. This chain is Small ribosomal subunit biogenesis GTPase RsgA, found in Dichelobacter nodosus (strain VCS1703A).